Here is a 412-residue protein sequence, read N- to C-terminus: CapZ-interacting protein (412 aa).

2 disordered regions span residues 1-84 (MEER…KSSP) and 99-412 (ALLP…DTRM). Residues 7–20 (ETNSNVDSSAQPSV) show a composition bias toward polar residues. Ser68, Ser82, Ser83, Ser105, Ser108, Ser116, Ser120, and Ser123 each carry phosphoserine. Residue Thr124 is modified to Phosphothreonine. A phosphoserine mark is found at Ser126, Ser127, Ser135, and Ser143. Residues 159–176 (VRTRGSIKRRPPSRRFRR) are compositionally biased toward basic residues. Residues Ser177, Ser179, and Ser216 each carry the phosphoserine modification. Phosphothreonine occurs at positions 243 and 256. Over residues 248 to 258 (EKPEELVRTPE) the composition is skewed to basic and acidic residues. Ser297 is subject to Phosphoserine. Composition is skewed to basic and acidic residues over residues 298–312 (PREE…DTGK) and 319–330 (SEERVADEDRLG). Phosphoserine occurs at positions 333 and 401.

As to quaternary structure, interacts with CAPZA2 and CAPZB. In terms of processing, dephosphorylation results in its dissociation from CAPZA2.

Functionally, stress-induced phosphorylation of CAPZIP may regulate the ability of F-actin-capping protein to remodel actin filament assembly. In Mus musculus (Mouse), this protein is CapZ-interacting protein (Rcsd1).